Here is a 145-residue protein sequence, read N- to C-terminus: UPF0179 protein TV1250 (145 aa).

This sequence belongs to the UPF0179 family.

The chain is UPF0179 protein TV1250 from Thermoplasma volcanium (strain ATCC 51530 / DSM 4299 / JCM 9571 / NBRC 15438 / GSS1).